We begin with the raw amino-acid sequence, 99 residues long: ATP-dependent Clp protease adapter protein ClpS (99 aa).

It belongs to the ClpS family. As to quaternary structure, binds to the N-terminal domain of the chaperone ClpA.

In terms of biological role, involved in the modulation of the specificity of the ClpAP-mediated ATP-dependent protein degradation. This is ATP-dependent Clp protease adapter protein ClpS from Acetivibrio thermocellus (strain ATCC 27405 / DSM 1237 / JCM 9322 / NBRC 103400 / NCIMB 10682 / NRRL B-4536 / VPI 7372) (Clostridium thermocellum).